We begin with the raw amino-acid sequence, 173 residues long: Putative MgpC-like protein MPN_092 (173 aa).

It belongs to the MgpC family.

This Mycoplasma pneumoniae (strain ATCC 29342 / M129 / Subtype 1) (Mycoplasmoides pneumoniae) protein is Putative MgpC-like protein MPN_092.